Reading from the N-terminus, the 1379-residue chain is DNA-directed RNA polymerase subunit beta (1379 aa).

It belongs to the RNA polymerase beta chain family. In terms of assembly, the RNAP catalytic core consists of 2 alpha, 1 beta, 1 beta' and 1 omega subunit. When a sigma factor is associated with the core the holoenzyme is formed, which can initiate transcription.

It carries out the reaction RNA(n) + a ribonucleoside 5'-triphosphate = RNA(n+1) + diphosphate. Its function is as follows. DNA-dependent RNA polymerase catalyzes the transcription of DNA into RNA using the four ribonucleoside triphosphates as substrates. The sequence is that of DNA-directed RNA polymerase subunit beta from Allorhizobium ampelinum (strain ATCC BAA-846 / DSM 112012 / S4) (Agrobacterium vitis (strain S4)).